A 514-amino-acid polypeptide reads, in one-letter code: 2,3-bisphosphoglycerate-independent phosphoglycerate mutase (514 aa).

The Mn(2+) site is built by D15 and S65. The Phosphoserine intermediate role is filled by S65. Substrate-binding positions include H126, R156 to D157, R188, R194, R261 to R264, and K335. The Mn(2+) site is built by D403, H407, D444, H445, and H462.

It belongs to the BPG-independent phosphoglycerate mutase family. As to quaternary structure, monomer. Mn(2+) serves as cofactor.

It catalyses the reaction (2R)-2-phosphoglycerate = (2R)-3-phosphoglycerate. The protein operates within carbohydrate degradation; glycolysis; pyruvate from D-glyceraldehyde 3-phosphate: step 3/5. Its function is as follows. Catalyzes the interconversion of 2-phosphoglycerate and 3-phosphoglycerate. The sequence is that of 2,3-bisphosphoglycerate-independent phosphoglycerate mutase from Syntrophotalea carbinolica (strain DSM 2380 / NBRC 103641 / GraBd1) (Pelobacter carbinolicus).